The chain runs to 198 residues: Calcium channel flower (198 aa).

3 helical membrane-spanning segments follow: residues 36–56 (LGIVAAFFAILFGLWNVLSII), 67–89 (IIQMIAGFIVMVLEAPCCFVCIE), and 114–134 (AVPPIFMCFGLASLFGSGLIF).

Belongs to the calcium channel flower family. As to quaternary structure, homomultimer. Associates with the dally/ magu complex.

It is found in the cell membrane. It localises to the cytoplasmic vesicle. Its subcellular location is the secretory vesicle. The protein localises to the synaptic vesicle membrane. The protein resides in the presynaptic cell membrane. It is found in the endosome. Its activity is regulated as follows. Channel activity is inhibited by La(3+), which reduces Ca(2+) influx and thus inhibits it's function in promoting activity-dependent bulk endocytosis (ADBE) in response to high stimuli. Functionally, transmembrane protein which mediates synaptic endocytosis, fitness-based cell culling, neuronal culling, morphogen gradient scaling, and calcium transport. Regulates synaptic endocytosis and hence couples exo- with endocytosis. Controls two major modes of synaptic vesicle (SV) endocytosis in the synaptic boutons of neuromuscular junctions (NMJs); Ca(2+) channel-independent Clathrin-mediated endocytosis (CME) in response to mild stimulation, and Ca(2+) channel-dependent activity-dependent bulk endocytosis (ADBE) in response to strong stimulation. Functions in ADBE and subsequent SV reformation from bulk endosomes by initiating Ca(2+) channel-dependent phosphatidylinositol 4,5-bisphosphate (PtdIns(4,5)P2) compartmentalization in synaptic boutons. There it acts at the periactive zone to provide the low Ca(2+) levels required to initiate Calcineurin activation and upregulate PtdIns(4,5)P2. Conversely PtdIns(4,5)P2 enhances fwe Ca(2+) channel-activity, establishing a positive feedback loop that induces PtdIns(4,5)P2 microdomain at the periactive zone. These microdomains trigger bulk membrane invagination (i.e. ADBE) by triggering actin polymerization while also promoting localization of fwe to bulk endosomes, thereby removing the ADBE trigger to reduce endocytosis and prevent excess membrane uptake. PtdIns(4,5)P2 then promotes SV reformation from the bulk endosomes, to coordinate ADBE and subsequent SV reformation. Different combinations of the flower isoforms at the cell membrane are also required for the identification and elimination of suboptimal or supernumerary cells during development, regeneration, and adulthood. Required for the recognition and elimination of unfit cells in the developing wing during cell competition. In the developing pupal retina, mediates the elimination of unwanted postmitotic neurons, including supernumerary photoreceptor neurons that form at the periphery of the retina and are contained within incomplete ommatidia units. Also required for efficient elimination and replacement of old neurons by newly generated neurons during regeneration in the adult brain following mechanical injury. Downstream of the flower fitness fingerprints, cells identified as unwanted or unfit are eliminated via apoptosis through the expression of ahuizotl (azot). However, the cells marked for elimination by the flower isoforms only undergo apoptosis if additional thresholds are met; (1) their neighboring fit/healthy cells express different levels of the fwe isoforms, and (2) the levels of the protective signal SPARC expressed by the loser or unwanted cells are unable to inhibit caspase activation. These additional thresholds for flower-mediated apoptosis, allows useful cells to recover from transient and limited stress before they are unnecessarily eliminated. Functions with dally and magu in a mechanism of scaling, which utilises apoptosis to ensure that the dpp morphogen gradient, which mediates organ growth, remains proportional to the size of the growing wing. In this mechanism, fwe represses dally- and Magu-dependent activity in expanding the gradient, and dally/Magu inhibits fwe-dependent apoptosis to keep cell death rate low. When the levels of these different proteins are optimally regulated the gradient correctly scales with organ growth but when this fails, fwe-mediated apoptosis is activated to trim the developing tissue to match the correct size of the gradient. The chain is Calcium channel flower from Drosophila persimilis (Fruit fly).